We begin with the raw amino-acid sequence, 364 residues long: Gap junction delta-4 protein (364 aa).

Residues 1-19 (MEKLNLLGFLIITLNCNVT) lie on the Cytoplasmic side of the membrane. Residues 20–40 (IMGMIWLIVEVLLRMLVVVLA) form a helical membrane-spanning segment. The Extracellular segment spans residues 41–76 (GSPIYEDEQERFICNTLQPGCANVCYDLFSPVSPLR). Residues 77–97 (FWLVQSLALLLPSVVFGTYTL) form a helical membrane-spanning segment. At 98–128 (HRGAKLAAVGGACRPQVPDLSTAYLVHLLLR) the chain is on the cytoplasmic side. The chain crosses the membrane as a helical span at residues 129–149 (MLLEAGLAFLHYFLFGFSVPA). Topologically, residues 150–173 (RVSCSHVPCSGAVDCYVSRPTEKS) are extracellular. The helical transmembrane segment at 174 to 194 (LLILFFWAVSALSFLLSLADL) threads the bilayer. The Cytoplasmic portion of the chain corresponds to 195 to 364 (LWILPRRKTL…HLRTKKSEWV (170 aa)). Residues 331–340 (HLARHSSASK) show a composition bias toward polar residues. The tract at residues 331–364 (HLARHSSASKPQAPCRLTTSGSAPHLRTKKSEWV) is disordered.

The protein belongs to the connexin family. Delta-type subfamily. A connexon is composed of a hexamer of connexins.

It localises to the cell membrane. Its subcellular location is the cell junction. It is found in the gap junction. In terms of biological role, one gap junction consists of a cluster of closely packed pairs of transmembrane channels, the connexons, through which materials of low MW diffuse from one cell to a neighboring cell. The chain is Gap junction delta-4 protein (Gjd4) from Mus musculus (Mouse).